The sequence spans 331 residues: Adenosine deaminase (331 aa).

Residues His-12 and His-14 each contribute to the Zn(2+) site. Positions 14, 16, and 170 each coordinate substrate. His-197 is a binding site for Zn(2+). The active-site Proton donor is the Glu-200. Residue Asp-278 coordinates Zn(2+).

Belongs to the metallo-dependent hydrolases superfamily. Adenosine and AMP deaminases family. Adenosine deaminase subfamily. Zn(2+) is required as a cofactor.

It catalyses the reaction adenosine + H2O + H(+) = inosine + NH4(+). The catalysed reaction is 2'-deoxyadenosine + H2O + H(+) = 2'-deoxyinosine + NH4(+). In terms of biological role, catalyzes the hydrolytic deamination of adenosine and 2-deoxyadenosine. In Clostridium botulinum (strain 657 / Type Ba4), this protein is Adenosine deaminase.